Consider the following 1484-residue polypeptide: Chromatin remodeling regulator CECR2 (1484 aa).

The interval V170–G241 is disordered. The span at T197–K209 shows a compositional bias: basic residues. Basic and acidic residues predominate over residues L210–E222. Residues N223–G234 show a composition bias toward polar residues. Position 422 is a phosphoserine (S422). The region spanning F434–H538 is the Bromo domain. Position 546 is a phosphothreonine (T546). Disordered stretches follow at residues E556–L704, G796–L825, G919–G1053, V1165–D1259, A1287–D1320, and Y1442–S1484. S571 is subject to Phosphoserine. Residues S605–S614 are compositionally biased toward low complexity. S1014 is subject to Phosphoserine. An asymmetric dimethylarginine mark is found at R1197 and R1203. Residues S1243–R1254 are compositionally biased toward pro residues. Residues D1304–D1320 show a composition bias toward basic and acidic residues. S1312 bears the Phosphoserine mark. Positions P1451–E1469 are enriched in polar residues. A compositionally biased stretch (pro residues) spans H1474–S1484.

In terms of assembly, component of the CERF-1 ISWI chromatin remodeling complex (also called the CECR2-containing remodeling factor (CERF) complex) at least composed of CECR2 and SMARCA1. Component of the CERF-5 ISWI chromatin remodeling complex at least composed of SMARCA5/SNF2H and CECR2. LUZP1 is detected as part of the CERF-1 and CERF-5 complexes in embryonic stem (ES) cells where it is involved in complex stabilization but is not detected in the complexes in the testis. Interacts with CCAR2; CCAR2 may form part of the CERF-1 and/or CEF-5 ISWI chromatin remodeling complexes in ES cells. Interacts with acetylated lysine residues on histone H2A and H3 (in vitro). Interacts with LRPPRC. In terms of tissue distribution, highly expressed in skeletal muscle, thymus, placenta and lung. Expressed at lower level in brain, heart, colon, spleen, kidney.

It localises to the nucleus. In terms of biological role, regulatory subunit of the ATP-dependent CERF-1 and CERF-5 ISWI chromatin remodeling complexes, which form ordered nucleosome arrays on chromatin and facilitate access to DNA during DNA-templated processes such as DNA replication, transcription, and repair. The complexes do not have the ability to slide mononucleosomes to the center of a DNA template. The CERF-1 ISWI chromatin remodeling complex has a lower ATP hydrolysis rate than the CERF-5 ISWI chromatin remodeling complex. Plays a role in various processes during development: required during embryogenesis for neural tube closure and inner ear development. In adults, required for spermatogenesis, via the formation of ISWI-type chromatin complexes. In histone-modifying complexes, CECR2 recognizes and binds acylated histones: binds histones that are acetylated and/or butyrylated. May also be involved through its interaction with LRPPRC in the integration of cytoskeletal network with vesicular trafficking, nucleocytosolic shuttling, transcription, chromosome remodeling and cytokinesis. The chain is Chromatin remodeling regulator CECR2 (CECR2) from Homo sapiens (Human).